Reading from the N-terminus, the 365-residue chain is tRNA N6-adenosine threonylcarbamoyltransferase (365 aa).

Fe cation is bound by residues His111 and His115. Residues 140 to 144 (IVSGG), Asp173, Gly186, and Asn298 each bind substrate. Asp323 contacts Fe cation.

This sequence belongs to the KAE1 / TsaD family. Fe(2+) is required as a cofactor.

It is found in the cytoplasm. The catalysed reaction is L-threonylcarbamoyladenylate + adenosine(37) in tRNA = N(6)-L-threonylcarbamoyladenosine(37) in tRNA + AMP + H(+). Required for the formation of a threonylcarbamoyl group on adenosine at position 37 (t(6)A37) in tRNAs that read codons beginning with adenine. Is involved in the transfer of the threonylcarbamoyl moiety of threonylcarbamoyl-AMP (TC-AMP) to the N6 group of A37, together with TsaE and TsaB. TsaD likely plays a direct catalytic role in this reaction. In Thermomicrobium roseum (strain ATCC 27502 / DSM 5159 / P-2), this protein is tRNA N6-adenosine threonylcarbamoyltransferase.